We begin with the raw amino-acid sequence, 503 residues long: ATP synthase subunit alpha (503 aa).

Residue glycine 169 to threonine 176 coordinates ATP.

The protein belongs to the ATPase alpha/beta chains family. In terms of assembly, F-type ATPases have 2 components, CF(1) - the catalytic core - and CF(0) - the membrane proton channel. CF(1) has five subunits: alpha(3), beta(3), gamma(1), delta(1), epsilon(1). CF(0) has three main subunits: a(1), b(2) and c(9-12). The alpha and beta chains form an alternating ring which encloses part of the gamma chain. CF(1) is attached to CF(0) by a central stalk formed by the gamma and epsilon chains, while a peripheral stalk is formed by the delta and b chains.

It localises to the cell membrane. The catalysed reaction is ATP + H2O + 4 H(+)(in) = ADP + phosphate + 5 H(+)(out). In terms of biological role, produces ATP from ADP in the presence of a proton gradient across the membrane. The alpha chain is a regulatory subunit. The protein is ATP synthase subunit alpha of Lactobacillus delbrueckii subsp. bulgaricus (strain ATCC BAA-365 / Lb-18).